Reading from the N-terminus, the 185-residue chain is Putative lipoprotein LprB (185 aa).

The N-terminal stretch at 1 to 24 is a signal peptide; sequence MRRKVRRLTLAVSALVALFPAVAG. Cys-25 is lipidated: N-palmitoyl cysteine. Cys-25 carries the S-diacylglycerol cysteine lipid modification. The disordered stretch occupies residues 26–50; the sequence is SDSGDNKPGATIPSTPANAEGRHGP.

It localises to the cell membrane. The chain is Putative lipoprotein LprB (lprB) from Mycobacterium bovis (strain ATCC BAA-935 / AF2122/97).